The chain runs to 244 residues: Small ribosomal subunit protein eS4 (244 aa).

One can recognise an S4 RNA-binding domain in the interval 43 to 106; that stretch reads LPLLLVVRDV…DETYLVLFDE (64 aa).

It belongs to the eukaryotic ribosomal protein eS4 family.

The chain is Small ribosomal subunit protein eS4 from Methanococcus maripaludis (strain DSM 14266 / JCM 13030 / NBRC 101832 / S2 / LL).